Consider the following 770-residue polypeptide: ATP-dependent RNA helicase HCA4 (770 aa).

Positions lysine 41 to alanine 69 match the Q motif motif. Residues isoleucine 72–valine 246 enclose the Helicase ATP-binding domain. Alanine 85–threonine 92 contacts ATP. Positions aspartate 194–aspartate 197 match the DEAD box motif. Residues lysine 278 to leucine 437 form the Helicase C-terminal domain. Phosphoserine is present on residues serine 692, serine 710, serine 714, and serine 743. Residues glycine 705–histidine 724 are disordered.

The protein belongs to the DEAD box helicase family. DDX10/DBP4 subfamily. As to quaternary structure, interacts with the U3 and U14 snoRNAs. Associates with pre-ribosomal complexes.

It is found in the nucleus. The protein localises to the nucleolus. It catalyses the reaction ATP + H2O = ADP + phosphate + H(+). ATP-dependent RNA helicase required for ribosome biogenesis. Involved in the release of U14 snoRNA in pre-ribosomal complexes. Required for pre-rRNA cleavage at site A2. This chain is ATP-dependent RNA helicase HCA4 (HCA4), found in Saccharomyces cerevisiae (strain ATCC 204508 / S288c) (Baker's yeast).